The following is a 368-amino-acid chain: Aminomethyltransferase (368 aa).

The protein belongs to the GcvT family. The glycine cleavage system is composed of four proteins: P, T, L and H.

It carries out the reaction N(6)-[(R)-S(8)-aminomethyldihydrolipoyl]-L-lysyl-[protein] + (6S)-5,6,7,8-tetrahydrofolate = N(6)-[(R)-dihydrolipoyl]-L-lysyl-[protein] + (6R)-5,10-methylene-5,6,7,8-tetrahydrofolate + NH4(+). The glycine cleavage system catalyzes the degradation of glycine. The chain is Aminomethyltransferase from Xylella fastidiosa (strain M23).